The following is a 387-amino-acid chain: Xylose isomerase (387 aa).

Residues histidine 53 and aspartate 56 contribute to the active site. Mg(2+)-binding residues include glutamate 180, glutamate 216, histidine 219, aspartate 244, aspartate 254, aspartate 256, and aspartate 286.

This sequence belongs to the xylose isomerase family. In terms of assembly, homotetramer. Requires Mg(2+) as cofactor.

The protein localises to the cytoplasm. It carries out the reaction alpha-D-xylose = alpha-D-xylulofuranose. In Thermus thermophilus (strain ATCC 27634 / DSM 579 / HB8), this protein is Xylose isomerase (xylA).